The primary structure comprises 328 residues: Methionyl-tRNA formyltransferase (328 aa).

110–113 lines the (6S)-5,6,7,8-tetrahydrofolate pocket; that stretch reads SLLP.

Belongs to the Fmt family.

The catalysed reaction is L-methionyl-tRNA(fMet) + (6R)-10-formyltetrahydrofolate = N-formyl-L-methionyl-tRNA(fMet) + (6S)-5,6,7,8-tetrahydrofolate + H(+). Functionally, attaches a formyl group to the free amino group of methionyl-tRNA(fMet). The formyl group appears to play a dual role in the initiator identity of N-formylmethionyl-tRNA by promoting its recognition by IF2 and preventing the misappropriation of this tRNA by the elongation apparatus. This Prochlorococcus marinus subsp. pastoris (strain CCMP1986 / NIES-2087 / MED4) protein is Methionyl-tRNA formyltransferase.